A 705-amino-acid chain; its full sequence is Polyribonucleotide nucleotidyltransferase (705 aa).

Positions 486 and 492 each coordinate Mg(2+). Residues 553–612 (PQFHTMKVDPEKIRDIIGKGGATIRSITEETGASIDIDDDGTVKIYGDDGDSLQGAINRI) enclose the KH domain. The region spanning 622 to 690 (GEVYKGKVVR…QRGRIKLSIK (69 aa)) is the S1 motif domain.

The protein belongs to the polyribonucleotide nucleotidyltransferase family. As to quaternary structure, component of the RNA degradosome, which is a multiprotein complex involved in RNA processing and mRNA degradation. Mg(2+) is required as a cofactor.

It localises to the cytoplasm. It carries out the reaction RNA(n+1) + phosphate = RNA(n) + a ribonucleoside 5'-diphosphate. Functionally, involved in mRNA degradation. Catalyzes the phosphorolysis of single-stranded polyribonucleotides processively in the 3'- to 5'-direction. This is Polyribonucleotide nucleotidyltransferase from Teredinibacter turnerae (strain ATCC 39867 / T7901).